Here is a 501-residue protein sequence, read N- to C-terminus: Zinc-binding lipoprotein AdcA (501 aa).

The first 18 residues, 1–18, serve as a signal peptide directing secretion; it reads MKKISLLLASLCALFLVA. A lipid anchor (N-palmitoyl cysteine) is attached at C19. C19 carries S-diacylglycerol cysteine lipidation. H63 contacts Zn(2+). Positions 116–136 are disordered; sequence LPGGEEEEGDHDHGEEGHHHE. The segment at 120-136 is his-rich loop; the sequence is EEEEGDHDHGEEGHHHE. Residues 125–136 are compositionally biased toward basic and acidic residues; sequence DHDHGEEGHHHE. Residues H140, H204, and E279 each coordinate Zn(2+).

Belongs to the bacterial solute-binding protein 9 family.

It localises to the cell membrane. In terms of biological role, part of the ATP-binding cassette (ABC) transport system AdcABC involved in zinc import. Binds zinc with high affinity and specificity and delivers it to the membrane permease for translocation into the cytoplasm. This Streptococcus pneumoniae serotype 4 (strain ATCC BAA-334 / TIGR4) protein is Zinc-binding lipoprotein AdcA (adcA).